We begin with the raw amino-acid sequence, 508 residues long: Photosystem II CP47 reaction center protein (508 aa).

6 helical membrane passes run 21–36 (AVHI…WAGS), 101–115 (IVFS…IWHW), 140–156 (GIHL…FGAF), 203–218 (IAAG…FHLS), 237–252 (VLSS…AFIV), and 457–472 (TFAL…HGAR).

This sequence belongs to the PsbB/PsbC family. PsbB subfamily. As to quaternary structure, PSII is composed of 1 copy each of membrane proteins PsbA, PsbB, PsbC, PsbD, PsbE, PsbF, PsbH, PsbI, PsbJ, PsbK, PsbL, PsbM, PsbT, PsbX, PsbY, PsbZ, Psb30/Ycf12, at least 3 peripheral proteins of the oxygen-evolving complex and a large number of cofactors. It forms dimeric complexes. Binds multiple chlorophylls. PSII binds additional chlorophylls, carotenoids and specific lipids. serves as cofactor.

Its subcellular location is the plastid. The protein localises to the chloroplast thylakoid membrane. Functionally, one of the components of the core complex of photosystem II (PSII). It binds chlorophyll and helps catalyze the primary light-induced photochemical processes of PSII. PSII is a light-driven water:plastoquinone oxidoreductase, using light energy to abstract electrons from H(2)O, generating O(2) and a proton gradient subsequently used for ATP formation. This Cryptomeria japonica (Japanese cedar) protein is Photosystem II CP47 reaction center protein.